Consider the following 501-residue polypeptide: 25-hydroxyvitamin D-1 alpha hydroxylase, mitochondrial (501 aa).

Position 448 (Cys-448) interacts with heme.

It belongs to the cytochrome P450 family. Heme is required as a cofactor. In terms of tissue distribution, kidney.

Its subcellular location is the mitochondrion membrane. It carries out the reaction calcidiol + 2 reduced [adrenodoxin] + O2 + 2 H(+) = calcitriol + 2 oxidized [adrenodoxin] + H2O. The catalysed reaction is secalciferol + 2 reduced [adrenodoxin] + O2 + 2 H(+) = calcitetrol + 2 oxidized [adrenodoxin] + H2O. It participates in hormone biosynthesis; cholecalciferol biosynthesis. In terms of biological role, catalyzes the conversion of 25-hydroxyvitamin D3 (25(OH)D3) to 1-alpha,25-dihydroxyvitamin D3 (1alpha,25(OH)(2)D3), and of 24,25-dihydroxyvitamin D3 (24,25(OH)(2)D3) to 1-alpha,24,25-trihydroxyvitamin D3 (1alpha,24,25(OH)(3)D3). Is also active with 25-hydroxy-24-oxo-vitamin D3. Plays an important role in normal bone growth, calcium metabolism, and tissue differentiation. This Rattus norvegicus (Rat) protein is 25-hydroxyvitamin D-1 alpha hydroxylase, mitochondrial (Cyp27b1).